The sequence spans 243 residues: Leucinostatins biosynthesis cluster protein S (243 aa).

Functionally, part of the gene cluster that mediates the biosynthesis of the lipopeptide antibiotics leucinostatins that show extensive biological activities, including antimalarial, antiviral, antibacterial, antifungal, and antitumor activities, as well as phytotoxic. The function of lcsS within the leucinostatins biosynthesis has not been identified yet. This is Leucinostatins biosynthesis cluster protein S from Purpureocillium lilacinum (Paecilomyces lilacinus).